The chain runs to 94 residues: Beta-diguetoxin-Dc1a (94 aa).

Residues 1 to 17 (MKVFVVLLCLSLAAVYA) form the signal peptide. Positions 18-38 (LEERLDKDADIMLDSPADMER) are excised as a propeptide. 4 cysteine pairs are disulfide-bonded: Cys-50–Cys-63, Cys-57–Cys-77, Cys-62–Cys-91, and Cys-79–Cys-89.

The protein belongs to the neurotoxin 26 (DTX) family. As to expression, expressed by the venom gland.

It is found in the secreted. Insecticidal toxin. This toxin promotes opening of insect Nav channels. The toxin binds to the S1-S2 and S3-S4 loops in the domain II voltage-sensor of insect Nav channels (i.e., receptor site 4). The American cockroach P.americana is largely resistant to the effects of this toxin due to an unusual sequence within the domain II S1-S2 loop. In vivo, paralyzes lepidopteran and dipteran larvae. Paralyzed insects ultimately die from secondary effects of starvation and dehydration. The protein is Beta-diguetoxin-Dc1a of Diguetia canities (Desert bush spider).